A 430-amino-acid polypeptide reads, in one-letter code: Lipoyl synthase, mitochondrial (430 aa).

A mitochondrion-targeting transit peptide spans 1 to 29 (MASPVPIQRLQAPLRRSLARAAALSTRSY). The segment covering 28–58 (SYATIPSGPSSQPTSQESSSAASASAPATKP) has biased composition (low complexity). A disordered region spans residues 28-62 (SYATIPSGPSSQPTSQESSSAASASAPATKPRPTY). 7 residues coordinate [4Fe-4S] cluster: Cys-142, Cys-147, Cys-153, Cys-173, Cys-177, Cys-180, and Ser-390. Positions 156-379 (GSNKAAATAT…RQRALDMGFL (224 aa)) constitute a Radical SAM core domain.

The protein belongs to the radical SAM superfamily. Lipoyl synthase family. [4Fe-4S] cluster is required as a cofactor.

It is found in the mitochondrion. The catalysed reaction is [[Fe-S] cluster scaffold protein carrying a second [4Fe-4S](2+) cluster] + N(6)-octanoyl-L-lysyl-[protein] + 2 oxidized [2Fe-2S]-[ferredoxin] + 2 S-adenosyl-L-methionine + 4 H(+) = [[Fe-S] cluster scaffold protein] + N(6)-[(R)-dihydrolipoyl]-L-lysyl-[protein] + 4 Fe(3+) + 2 hydrogen sulfide + 2 5'-deoxyadenosine + 2 L-methionine + 2 reduced [2Fe-2S]-[ferredoxin]. It functions in the pathway protein modification; protein lipoylation via endogenous pathway; protein N(6)-(lipoyl)lysine from octanoyl-[acyl-carrier-protein]: step 2/2. Catalyzes the radical-mediated insertion of two sulfur atoms into the C-6 and C-8 positions of the octanoyl moiety bound to the lipoyl domains of lipoate-dependent enzymes, thereby converting the octanoylated domains into lipoylated derivatives. This is Lipoyl synthase, mitochondrial from Neurospora crassa (strain ATCC 24698 / 74-OR23-1A / CBS 708.71 / DSM 1257 / FGSC 987).